The following is a 166-amino-acid chain: Small ribosomal subunit protein uS5 (166 aa).

The region spanning 11 to 74 (LEDRVVAINR…EDAKKNLVEV (64 aa)) is the S5 DRBM domain.

The protein belongs to the universal ribosomal protein uS5 family. As to quaternary structure, part of the 30S ribosomal subunit. Contacts proteins S4 and S8.

With S4 and S12 plays an important role in translational accuracy. Its function is as follows. Located at the back of the 30S subunit body where it stabilizes the conformation of the head with respect to the body. This Enterococcus faecalis (strain ATCC 700802 / V583) protein is Small ribosomal subunit protein uS5.